Reading from the N-terminus, the 175-residue chain is Putative FAS1 domain-containing protein 081L (175 aa).

Residues 28–172 enclose the FAS1 domain; sequence GPIVPSVWTI…GLVHIVDQFP (145 aa).

This Invertebrate iridescent virus 3 (IIV-3) protein is Putative FAS1 domain-containing protein 081L.